The sequence spans 356 residues: S-adenosylmethionine:tRNA ribosyltransferase-isomerase (356 aa).

This sequence belongs to the QueA family. Monomer.

It localises to the cytoplasm. It catalyses the reaction 7-aminomethyl-7-carbaguanosine(34) in tRNA + S-adenosyl-L-methionine = epoxyqueuosine(34) in tRNA + adenine + L-methionine + 2 H(+). Its pathway is tRNA modification; tRNA-queuosine biosynthesis. Functionally, transfers and isomerizes the ribose moiety from AdoMet to the 7-aminomethyl group of 7-deazaguanine (preQ1-tRNA) to give epoxyqueuosine (oQ-tRNA). The polypeptide is S-adenosylmethionine:tRNA ribosyltransferase-isomerase (Escherichia coli O8 (strain IAI1)).